We begin with the raw amino-acid sequence, 535 residues long: Phosphoenolpyruvate carboxykinase (ATP) (535 aa).

Substrate contacts are provided by Arg59, Tyr201, and Lys207. ATP is bound by residues Lys207, His226, and 243-251; that span reads GLSGTGKTT. Residues Lys207 and His226 each contribute to the Mn(2+) site. Mn(2+) is bound at residue Asp264. Residues Glu292, Arg328, 444–445, and Thr450 each bind ATP; that span reads RI. Arg328 contacts substrate.

This sequence belongs to the phosphoenolpyruvate carboxykinase (ATP) family. Requires Mn(2+) as cofactor.

It is found in the cytoplasm. The catalysed reaction is oxaloacetate + ATP = phosphoenolpyruvate + ADP + CO2. It participates in carbohydrate biosynthesis; gluconeogenesis. Functionally, involved in the gluconeogenesis. Catalyzes the conversion of oxaloacetate (OAA) to phosphoenolpyruvate (PEP) through direct phosphoryl transfer between the nucleoside triphosphate and OAA. This chain is Phosphoenolpyruvate carboxykinase (ATP), found in Bacteroides thetaiotaomicron (strain ATCC 29148 / DSM 2079 / JCM 5827 / CCUG 10774 / NCTC 10582 / VPI-5482 / E50).